Consider the following 302-residue polypeptide: tRNA pseudouridine synthase B (302 aa).

Catalysis depends on Asp45, which acts as the Nucleophile.

Belongs to the pseudouridine synthase TruB family. Type 1 subfamily.

It catalyses the reaction uridine(55) in tRNA = pseudouridine(55) in tRNA. Functionally, responsible for synthesis of pseudouridine from uracil-55 in the psi GC loop of transfer RNAs. This is tRNA pseudouridine synthase B from Francisella tularensis subsp. tularensis (strain WY96-3418).